The sequence spans 713 residues: Polyribonucleotide nucleotidyltransferase (713 aa).

Asp487 and Asp493 together coordinate Mg(2+). A KH domain is found at 554–613 (PRIEVMNIPVDKIREVIGSGGKVIREIVEKTGAKINIEDDGTVKIASASGKEIEAARKWI). An S1 motif domain is found at 623-691 (GQIYEGTVVK…ERGKVRLSMK (69 aa)).

Belongs to the polyribonucleotide nucleotidyltransferase family. It depends on Mg(2+) as a cofactor.

The protein resides in the cytoplasm. It catalyses the reaction RNA(n+1) + phosphate = RNA(n) + a ribonucleoside 5'-diphosphate. Its function is as follows. Involved in mRNA degradation. Catalyzes the phosphorolysis of single-stranded polyribonucleotides processively in the 3'- to 5'-direction. This is Polyribonucleotide nucleotidyltransferase from Agrobacterium fabrum (strain C58 / ATCC 33970) (Agrobacterium tumefaciens (strain C58)).